A 314-amino-acid polypeptide reads, in one-letter code: 3'-5' exoribonuclease YhaM (314 aa).

One can recognise an HD domain in the interval 163–279; the sequence is HVVSMLHLAK…LHYIDNLDAK (117 aa).

Belongs to the YhaM family.

Shows a 3'-5' exoribonuclease activity. The sequence is that of 3'-5' exoribonuclease YhaM from Bacillus pumilus (strain SAFR-032).